Here is a 98-residue protein sequence, read N- to C-terminus: Defensin-like protein 192 (98 aa).

The N-terminal stretch at 1–27 (MATKSVSTFAIFFILVLAIFETPEIEA) is a signal peptide. Intrachain disulfides connect cysteine 32/cysteine 86, cysteine 45/cysteine 69, cysteine 54/cysteine 81, and cysteine 58/cysteine 83.

The protein belongs to the DEFL family. Protease inhibitor I18 (RTI/MTI-2) subfamily.

It localises to the secreted. The sequence is that of Defensin-like protein 192 (ATTI7) from Arabidopsis thaliana (Mouse-ear cress).